Here is a 402-residue protein sequence, read N- to C-terminus: Zinc finger protein 809 (402 aa).

Residues Val4–Gly75 form the KRAB domain. Residues Gln118–Lys139 are disordered. Over residues Thr125 to Lys139 the composition is skewed to basic residues. 7 C2H2-type zinc fingers span residues Tyr155–His178, Tyr184–His206, Tyr213–His235, Tyr241–His263, Phe269–His291, Tyr297–His319, and Tyr325–His347.

It belongs to the krueppel C2H2-type zinc-finger protein family.

Its subcellular location is the nucleus. Transcription factor specifically required to repress retrotransposons in embryonic stem cells. Recognizes and binds retroviral DNA sequences from a large subset of mammalian retroviruses and retroelements and repress their expression by recruiting a repressive complex containing TRIM28/KAP1. The sequence is that of Zinc finger protein 809 from Mus musculus (Mouse).